Here is a 204-residue protein sequence, read N- to C-terminus: Phosphopantothenoylcysteine decarboxylase (204 aa).

FMN-binding positions include phenylalanine 59 and 104–107; that span reads DANT. Residue asparagine 140 coordinates substrate. Cysteine 173 acts as the Proton donor in catalysis.

It belongs to the HFCD (homooligomeric flavin containing Cys decarboxylase) superfamily. As to quaternary structure, homotrimer. It depends on FMN as a cofactor.

It catalyses the reaction N-[(R)-4-phosphopantothenoyl]-L-cysteine + H(+) = (R)-4'-phosphopantetheine + CO2. The protein operates within cofactor biosynthesis; coenzyme A biosynthesis; CoA from (R)-pantothenate: step 3/5. Its function is as follows. Catalyzes the decarboxylation of the cysteine moiety of 4-phosphopantothenoylcysteine to form 4'-phosphopantotheine and this reaction forms part of the biosynthesis of coenzyme A. This chain is Phosphopantothenoylcysteine decarboxylase (PPCDC), found in Homo sapiens (Human).